Consider the following 546-residue polypeptide: MCSLGLFPPPPPRGQVTLYEHNNELVTGSSYESPPPDFRGQWINLPVLQLTKDPLKTPGRLDHGTRTAFIHHREQVWKRCINIWRDVGLFGVLNEIANSEEEVFEWVKTASGWALALCRWASSLHGSLFPHLSLRSEDLIAEFAQVTNWSSCCLRVFAWHPHTNKFAVALLDDSVRVYNASSTIVPSLKHRLQRNVASLAWKPLSASVLAVACQSCILIWTLDPTSLSTRPSSGCAQVLSHPGHTPVTSLAWAPSGGRLLSASPVDAAIRVWDVSTETCVPLPWFRGGGVTNLLWSPDGSKILATTPSAVFRVWEAQMWTCERWPTLSGRCQTGCWSPDGSRLLFTVLGEPLIYSLSFPERCGEGKGCVGGAKSATIVADLSETTIQTPDGEERLGGEAHSMVWDPSGERLAVLMKGKPRVQDGKPVILLFRTRNSPVFELLPCGIIQGEPGAQPQLITFHPSFNKGALLSVGWSTGRIAHIPLYFVNAQFPRFSPVLGRAQEPPAGGGGSIHDLPLFTETSPTSAPWDPLPGPPPVLPHSPHSHL.

An N-acetylcysteine modification is found at Cys-2. Position 33 is a phosphoserine (Ser-33). WD repeat units lie at residues 142–180 (EFAQ…VYNA), 183–222 (TIVP…IWTL), 234–274 (GCAQ…VWDV), 280–316 (VPLP…VWEA), 324–380 (WPTL…IVAD), 386–433 (IQTP…LFRT), and 442–482 (LPCG…IAHI). Phosphoserine is present on residues Ser-495, Ser-511, Ser-522, and Ser-525. Positions 500 to 546 (RAQEPPAGGGGSIHDLPLFTETSPTSAPWDPLPGPPPVLPHSPHSHL) are disordered. The segment covering 529–539 (DPLPGPPPVLP) has biased composition (pro residues). Phosphoserine is present on Ser-541. Positions 544-546 (SHL) match the Microbody targeting signal motif.

In terms of assembly, interacts with NDC1, the interaction is required for nuclear pore localization. Interacts with the inactive form aurora kinase AURKA. Interacts with PGRMC2. As to expression, widely expressed. Particularly abundant in cerebellum, corpus callosum, adrenal gland, pituitary gland, gastrointestinal structures and fetal lung.

The protein localises to the nucleus. Its subcellular location is the nuclear pore complex. The protein resides in the cytoplasm. It is found in the cytoskeleton. It localises to the spindle pole. The protein localises to the nucleus envelope. In terms of biological role, plays a role in the normal development of the peripheral and central nervous system. Required for the correct localization of aurora kinase AURKA and the microtubule minus end-binding protein NUMA1 as well as a subset of AURKA targets which ensures proper spindle formation and timely chromosome alignment. The sequence is that of Aladin (AAAS) from Homo sapiens (Human).